The chain runs to 595 residues: Aspartate--tRNA(Asp/Asn) ligase (595 aa).

Glu175 provides a ligand contact to L-aspartate. Residues 199–202 (QQYK) form an aspartate region. Positions 221 and 454 each coordinate L-aspartate. 221–223 (RDE) serves as a coordination point for ATP. Glu488 is an ATP binding site. Arg495 is a binding site for L-aspartate. 540-543 (GIDR) is a binding site for ATP.

The protein belongs to the class-II aminoacyl-tRNA synthetase family. Type 1 subfamily. As to quaternary structure, homodimer.

Its subcellular location is the cytoplasm. The catalysed reaction is tRNA(Asx) + L-aspartate + ATP = L-aspartyl-tRNA(Asx) + AMP + diphosphate. Its function is as follows. Aspartyl-tRNA synthetase with relaxed tRNA specificity since it is able to aspartylate not only its cognate tRNA(Asp) but also tRNA(Asn). Reaction proceeds in two steps: L-aspartate is first activated by ATP to form Asp-AMP and then transferred to the acceptor end of tRNA(Asp/Asn). The protein is Aspartate--tRNA(Asp/Asn) ligase of Brucella anthropi (strain ATCC 49188 / DSM 6882 / CCUG 24695 / JCM 21032 / LMG 3331 / NBRC 15819 / NCTC 12168 / Alc 37) (Ochrobactrum anthropi).